Here is a 271-residue protein sequence, read N- to C-terminus: 5-deoxy-glucuronate isomerase (271 aa).

This sequence belongs to the isomerase IolB family.

The enzyme catalyses 5-deoxy-D-glucuronate = 5-dehydro-2-deoxy-D-gluconate. It participates in polyol metabolism; myo-inositol degradation into acetyl-CoA; acetyl-CoA from myo-inositol: step 4/7. Involved in the isomerization of 5-deoxy-glucuronate (5DG) to 5-dehydro-2-deoxy-D-gluconate (DKG or 2-deoxy-5-keto-D-gluconate). The sequence is that of 5-deoxy-glucuronate isomerase from Shouchella clausii (strain KSM-K16) (Alkalihalobacillus clausii).